Reading from the N-terminus, the 899-residue chain is Alanine--tRNA ligase (899 aa).

4 residues coordinate Zn(2+): H595, H599, C703, and H707.

It belongs to the class-II aminoacyl-tRNA synthetase family. Zn(2+) is required as a cofactor.

It is found in the cytoplasm. It catalyses the reaction tRNA(Ala) + L-alanine + ATP = L-alanyl-tRNA(Ala) + AMP + diphosphate. Its function is as follows. Catalyzes the attachment of alanine to tRNA(Ala) in a two-step reaction: alanine is first activated by ATP to form Ala-AMP and then transferred to the acceptor end of tRNA(Ala). Also edits incorrectly charged Ser-tRNA(Ala) and Gly-tRNA(Ala) via its editing domain. The sequence is that of Alanine--tRNA ligase from Caldivirga maquilingensis (strain ATCC 700844 / DSM 13496 / JCM 10307 / IC-167).